The primary structure comprises 396 residues: tRNA (guanine-N(7)-)-methyltransferase non-catalytic subunit wuho (396 aa).

WD repeat units follow at residues 75 to 115 (KVEV…AQLL), 162 to 201 (GHLS…DIHS), 205 to 243 (GHKE…ELLL), and 302 to 342 (AGTW…RASG).

The protein belongs to the WD repeat TRM82 family. In terms of assembly, forms a heterodimer with the catalytic subunit Mettl1. Interacts with mei-P26 and weakly interacts with bgcn; required for the function or formation of the mei-P26-bgcn-bam-sxl complex. Interacts with nanos; may be involved in mei-P26-dependent derepression of the BMP signaling pathway. Interacts with Myc; the interaction may be mediated by mei-P26 and may be involved in the regulation of ribosome biogenesis. As to expression, in testis, it is present at high level in hub cells, a niche for germline stem cells of testis. Ubiquitously expressed in all testicular cells throughout spermatogenesis. Ubiquitously expressed in all germline and somatic cells of the ovary.

Its subcellular location is the nucleus. It localises to the cytoplasm. It functions in the pathway tRNA modification; N(7)-methylguanine-tRNA biosynthesis. In terms of biological role, required for the Mettl1-dependent formation of N(7)-methylguanine at position 46 (m7G46) in tRNA. In the Mettl1-wuho methyltransferase complex, it is required to stabilize and induce conformational changes of the catalytic subunit. Required for binding of nanos mRNA and repression of translation by the mei-P26-bgcn-bam-sxl complex. May cooperate with mei-P26 and nanos to derepress the BMP signaling pathway. May cooperate with mei-P26 to suppress expression of a subset of microRNAs. May cooperate with mei-P26 to regulate bam expression levels in germline cells during gametogenesis. Required to promote mitosis to meiosis transition during gametogenesis. May regulate germline cell division in part by regulating ribosome biogenesis. This chain is tRNA (guanine-N(7)-)-methyltransferase non-catalytic subunit wuho, found in Drosophila pseudoobscura pseudoobscura (Fruit fly).